A 131-amino-acid chain; its full sequence is Small ribosomal subunit protein uS8 (131 aa).

This sequence belongs to the universal ribosomal protein uS8 family. In terms of assembly, part of the 30S ribosomal subunit. Contacts proteins S5 and S12.

Functionally, one of the primary rRNA binding proteins, it binds directly to 16S rRNA central domain where it helps coordinate assembly of the platform of the 30S subunit. This chain is Small ribosomal subunit protein uS8, found in Wolbachia pipientis wMel.